Reading from the N-terminus, the 134-residue chain is Protein YhfA (134 aa).

The chain is Protein YhfA (yhfA) from Escherichia coli O157:H7.